Consider the following 425-residue polypeptide: Serine--tRNA ligase (425 aa).

Residue 230 to 232 coordinates L-serine; that stretch reads TAE. 261-263 provides a ligand contact to ATP; sequence RSE. Glutamate 284 contributes to the L-serine binding site. Residue 348–351 coordinates ATP; sequence EISS. Serine 384 contributes to the L-serine binding site.

This sequence belongs to the class-II aminoacyl-tRNA synthetase family. Type-1 seryl-tRNA synthetase subfamily. Homodimer. The tRNA molecule binds across the dimer.

It is found in the cytoplasm. It carries out the reaction tRNA(Ser) + L-serine + ATP = L-seryl-tRNA(Ser) + AMP + diphosphate + H(+). It catalyses the reaction tRNA(Sec) + L-serine + ATP = L-seryl-tRNA(Sec) + AMP + diphosphate + H(+). The protein operates within aminoacyl-tRNA biosynthesis; selenocysteinyl-tRNA(Sec) biosynthesis; L-seryl-tRNA(Sec) from L-serine and tRNA(Sec): step 1/1. Catalyzes the attachment of serine to tRNA(Ser). Is also able to aminoacylate tRNA(Sec) with serine, to form the misacylated tRNA L-seryl-tRNA(Sec), which will be further converted into selenocysteinyl-tRNA(Sec). The sequence is that of Serine--tRNA ligase from Maridesulfovibrio salexigens (strain ATCC 14822 / DSM 2638 / NCIMB 8403 / VKM B-1763) (Desulfovibrio salexigens).